A 237-amino-acid polypeptide reads, in one-letter code: DNA repair protein RecO (237 aa).

It belongs to the RecO family.

Involved in DNA repair and RecF pathway recombination. This chain is DNA repair protein RecO, found in Rickettsia rickettsii (strain Iowa).